The primary structure comprises 378 residues: Ribosomal RNA large subunit methyltransferase G (378 aa).

The protein belongs to the methyltransferase superfamily. RlmG family.

The protein resides in the cytoplasm. The enzyme catalyses guanosine(1835) in 23S rRNA + S-adenosyl-L-methionine = N(2)-methylguanosine(1835) in 23S rRNA + S-adenosyl-L-homocysteine + H(+). Specifically methylates the guanine in position 1835 (m2G1835) of 23S rRNA. The polypeptide is Ribosomal RNA large subunit methyltransferase G (Shewanella putrefaciens (strain CN-32 / ATCC BAA-453)).